A 595-amino-acid chain; its full sequence is DNA damage-binding protein CMR1 (595 aa).

The segment at Ala-20–Gly-79 is disordered. Over residues Pro-29–Lys-46 the composition is skewed to low complexity. Basic residues predominate over residues Thr-47–Ala-60. WD repeat units follow at residues Val-185–Pro-226, His-255–Ser-297, Asp-300–Gly-339, and Gly-349–Ser-389. The tract at residues Ala-397–Thr-429 is disordered. Low complexity predominate over residues Thr-405–Leu-415. The segment covering His-417–Asp-426 has biased composition (basic and acidic residues). WD repeat units lie at residues Gln-448–Asp-487, Leu-519–Trp-556, and Asp-558–Ile-595.

It belongs to the WD repeat DDB2/WDR76 family.

Functionally, DNA-binding protein that binds to both single- and double-stranded DNA. Binds preferentially to UV-damaged DNA. May be involved in DNA-metabolic processes. This Cryptococcus neoformans var. neoformans serotype D (strain B-3501A) (Filobasidiella neoformans) protein is DNA damage-binding protein CMR1.